Reading from the N-terminus, the 29-residue chain is Brevinin-2Ed (29 aa).

C23 and C29 form a disulfide bridge.

This sequence belongs to the frog skin active peptide (FSAP) family. Brevinin subfamily. In terms of tissue distribution, expressed by the skin glands.

Its subcellular location is the secreted. Shows antibacterial activity against representative Gram-negative and Gram-positive bacterial species, and hemolytic activity. This Pelophylax lessonae (Pool frog) protein is Brevinin-2Ed.